A 325-amino-acid polypeptide reads, in one-letter code: Nod factor export ATP-binding protein I (325 aa).

The region spanning 27 to 257 (LELRKVRKQY…QIGCDVVEVY (231 aa)) is the ABC transporter domain. Position 59–66 (59–66 (GPNGAGKT)) interacts with ATP.

This sequence belongs to the ABC transporter superfamily. Lipooligosaccharide exporter (TC 3.A.1.102) family. As to quaternary structure, the complex is composed of two ATP-binding proteins (NodI) and two transmembrane proteins (NodJ).

Its subcellular location is the cell inner membrane. Part of the ABC transporter complex NodIJ involved in the export of the nodulation factors (Nod factors), the bacterial signal molecules that induce symbiosis and subsequent nodulation induction. Nod factors are LCO (lipo-chitin oligosaccharide), a modified beta-1,4-linked N-acetylglucosamine oligosaccharide. This subunit is responsible for energy coupling to the transport system. The chain is Nod factor export ATP-binding protein I from Cupriavidus pinatubonensis (strain JMP 134 / LMG 1197) (Cupriavidus necator (strain JMP 134)).